Reading from the N-terminus, the 238-residue chain is Probable tetraspanin tspC (238 aa).

The Cytoplasmic portion of the chain corresponds to 1–16 (MVNTRDFLPKTTHYLK). Residues 17-37 (VPIIGLNAILWLLGLVLIVVG) form a helical membrane-spanning segment. At 38 to 69 (SVCISFFSNFKEFTKESGYKNALSNLTTSAPT) the chain is on the extracellular side. The N-linked (GlcNAc...) asparagine glycan is linked to N62. A helical transmembrane segment spans residues 70–90 (GVLVIGIFFILLTLVGCFVAY). Residues 91 to 93 (KEK) lie on the Cytoplasmic side of the membrane. The chain crosses the membrane as a helical span at residues 94-114 (LVGLVLYTMLMLILLVVLIGI). Residues 115 to 197 (GGKALTLDKE…GIFTKQVSSK (83 aa)) are Extracellular-facing. N143 and N164 each carry an N-linked (GlcNAc...) asparagine glycan. The helical transmembrane segment at 198–218 (LVLVGIAGVVIGCIEFVAMAL) threads the bilayer. Residues 219-238 (SLFLIIRICRSPRSRAYDQY) lie on the Cytoplasmic side of the membrane.

It belongs to the tetraspanin (TM4SF) family.

The protein resides in the membrane. The chain is Probable tetraspanin tspC (tspC) from Dictyostelium discoideum (Social amoeba).